The sequence spans 180 residues: ATP synthase subunit delta (180 aa).

The protein belongs to the ATPase delta chain family. As to quaternary structure, F-type ATPases have 2 components, F(1) - the catalytic core - and F(0) - the membrane proton channel. F(1) has five subunits: alpha(3), beta(3), gamma(1), delta(1), epsilon(1). F(0) has three main subunits: a(1), b(2) and c(10-14). The alpha and beta chains form an alternating ring which encloses part of the gamma chain. F(1) is attached to F(0) by a central stalk formed by the gamma and epsilon chains, while a peripheral stalk is formed by the delta and b chains.

Its subcellular location is the cell membrane. Its function is as follows. F(1)F(0) ATP synthase produces ATP from ADP in the presence of a proton or sodium gradient. F-type ATPases consist of two structural domains, F(1) containing the extramembraneous catalytic core and F(0) containing the membrane proton channel, linked together by a central stalk and a peripheral stalk. During catalysis, ATP synthesis in the catalytic domain of F(1) is coupled via a rotary mechanism of the central stalk subunits to proton translocation. This protein is part of the stalk that links CF(0) to CF(1). It either transmits conformational changes from CF(0) to CF(1) or is implicated in proton conduction. The polypeptide is ATP synthase subunit delta (Alkaliphilus oremlandii (strain OhILAs) (Clostridium oremlandii (strain OhILAs))).